The following is a 159-amino-acid chain: Photosystem I reaction center subunit XI (159 aa).

A run of 3 helical transmembrane segments spans residues 53-73 (LEIG…LGPL), 84-104 (LISG…YGIV), and 125-145 (FTAG…TLLE).

Belongs to the PsaL family.

It is found in the cellular thylakoid membrane. The protein is Photosystem I reaction center subunit XI of Cyanothece sp. (strain PCC 7425 / ATCC 29141).